We begin with the raw amino-acid sequence, 212 residues long: Ribonuclease HII (212 aa).

In terms of domain architecture, RNase H type-2 spans 7-212; that stretch reads SQILGIDEAG…TIENITKSTE (206 aa). Aspartate 13, glutamate 14, and aspartate 111 together coordinate a divalent metal cation.

The protein belongs to the RNase HII family. Requires Mn(2+) as cofactor. The cofactor is Mg(2+).

Its subcellular location is the cytoplasm. The catalysed reaction is Endonucleolytic cleavage to 5'-phosphomonoester.. In terms of biological role, endonuclease that specifically degrades the RNA of RNA-DNA hybrids. The polypeptide is Ribonuclease HII (Methanosphaera stadtmanae (strain ATCC 43021 / DSM 3091 / JCM 11832 / MCB-3)).